Reading from the N-terminus, the 361-residue chain is Phosphoserine aminotransferase (361 aa).

Arg42 serves as a coordination point for L-glutamate. Residues 76-77 (AT), Trp102, Thr152, Asp172, and Gln195 each bind pyridoxal 5'-phosphate. N6-(pyridoxal phosphate)lysine is present on Lys196. 237-238 (NT) contacts pyridoxal 5'-phosphate.

It belongs to the class-V pyridoxal-phosphate-dependent aminotransferase family. SerC subfamily. In terms of assembly, homodimer. The cofactor is pyridoxal 5'-phosphate.

Its subcellular location is the cytoplasm. It carries out the reaction O-phospho-L-serine + 2-oxoglutarate = 3-phosphooxypyruvate + L-glutamate. It catalyses the reaction 4-(phosphooxy)-L-threonine + 2-oxoglutarate = (R)-3-hydroxy-2-oxo-4-phosphooxybutanoate + L-glutamate. Its pathway is amino-acid biosynthesis; L-serine biosynthesis; L-serine from 3-phospho-D-glycerate: step 2/3. The protein operates within cofactor biosynthesis; pyridoxine 5'-phosphate biosynthesis; pyridoxine 5'-phosphate from D-erythrose 4-phosphate: step 3/5. Its function is as follows. Catalyzes the reversible conversion of 3-phosphohydroxypyruvate to phosphoserine and of 3-hydroxy-2-oxo-4-phosphonooxybutanoate to phosphohydroxythreonine. The polypeptide is Phosphoserine aminotransferase (Xanthomonas oryzae pv. oryzae (strain MAFF 311018)).